We begin with the raw amino-acid sequence, 543 residues long: MASFFDDDQPSNLTEFSVSELSGSIKRTIETAFDQVRVRGEISGFRGQHSSGHAYFSLKDDKARIDAVIWKGSFSKLKYRPEEGMEVIATGRITTFPGSSKYQIVIEQMEPAGAGALMALIEERKRRFTAEGLFDPATKQLLPFMPKVIGVVTSPTGAVIRDILHRISDRFPVHVLVWPVKVQGEGSGDEVANAINGFNAFQPDGVIPRPDVLIVARGGGSLEDLWSFNDEAVVRAAAASAIPLISAVGHETDWTLIDYAADVRAPTPTGAAEMAVPVKADLEAQLAGLAARLAGAVNRQMDHRRQNLRALARALPSLDQLLALPRRRFDEAASGLGRSLELNTMTKRQSFERAAAKLSPDMLVRRLVERRQRVSERAALSDRIIERLIERQKANLGRIDATLTAVPARLKAQTGRSRDRLDSFSRRADSAVINDLRRARSTVSAHDRMLQSLSYKNVLMRGYAVIRGQDDRPLSRAAGLEDGRAIAIEFADGRVSAVTGEGDKASPPPQAASATTTPAPGRPNPLPKSPKKSEPPAGQGSLF.

The tract at residues 498–543 (VTGEGDKASPPPQAASATTTPAPGRPNPLPKSPKKSEPPAGQGSLF) is disordered.

This sequence belongs to the XseA family. In terms of assembly, heterooligomer composed of large and small subunits.

Its subcellular location is the cytoplasm. It carries out the reaction Exonucleolytic cleavage in either 5'- to 3'- or 3'- to 5'-direction to yield nucleoside 5'-phosphates.. Its function is as follows. Bidirectionally degrades single-stranded DNA into large acid-insoluble oligonucleotides, which are then degraded further into small acid-soluble oligonucleotides. The polypeptide is Exodeoxyribonuclease 7 large subunit (Allorhizobium ampelinum (strain ATCC BAA-846 / DSM 112012 / S4) (Agrobacterium vitis (strain S4))).